A 107-amino-acid polypeptide reads, in one-letter code: Nucleoid-associated protein Rru_A3472 (107 aa).

Belongs to the YbaB/EbfC family. Homodimer.

It is found in the cytoplasm. The protein resides in the nucleoid. In terms of biological role, binds to DNA and alters its conformation. May be involved in regulation of gene expression, nucleoid organization and DNA protection. The chain is Nucleoid-associated protein Rru_A3472 from Rhodospirillum rubrum (strain ATCC 11170 / ATH 1.1.1 / DSM 467 / LMG 4362 / NCIMB 8255 / S1).